A 36-amino-acid polypeptide reads, in one-letter code: Thrombin-like enzyme TLP (36 aa).

In terms of domain architecture, Peptidase S1 spans 1–36; sequence IGGFECNEHEHRSLVYLYNSAGFFCAGTLLNHEWVV.

Belongs to the peptidase S1 family. Snake venom subfamily. As to quaternary structure, monomer. In terms of tissue distribution, expressed by the venom gland.

Its subcellular location is the secreted. In terms of biological role, thrombin-like snake venom serine protease. Shows strong hydrolytic activity towards Boc-Asp(oBzl)-Pro-Arg-MCA, a synthetic substrate for thrombin. This Naja naja (Indian cobra) protein is Thrombin-like enzyme TLP.